The primary structure comprises 266 residues: DNA primase (266 aa).

Positions 244–266 (VTTTTTPSPPKIGSMQTTTKSTT) are disordered. The span at 257-266 (SMQTTTKSTT) shows a compositional bias: polar residues.

It belongs to the baculoviridae LEF-1 family. In terms of assembly, interacts with LEF-2.

Functionally, plays an essential role in viral DNA replication. May generates single-stranded DNA for both leading and lagging strand synthesis. The primase initiates primer synthesis and thereby produces large amount of short RNA primers on the lagging strand that the polymerase elongates using dNTPs. The polypeptide is DNA primase (LEF-1) (Autographa californica nuclear polyhedrosis virus (AcMNPV)).